Reading from the N-terminus, the 214-residue chain is MVVKLYGQVTAACPQRVLLCFLEKGIEFEIIHIDLDTFEQKKPEHLLRQPFGQVPAIEDGDFKLFESRAIARYYATKFADQGTNLLGKSLEHRAIVDQWADVETYYFNVLAQPLVINLIIKPRLGEKCDVVLVEDLKVKLGVVLDIYNNRLSSNRFLAGEEFTMADLTHMPAMGYLMSITDINQMVKARGSFNRWWEEISDRPSWKKLMVLAGH.

Residues 2–82 (VVKLYGQVTA…YYATKFADQG (81 aa)) form the GST N-terminal domain. Residues 11 to 12 (AA), 40 to 41 (QK), 53 to 54 (QV), and 66 to 67 (ES) contribute to the glutathione site. The GST C-terminal domain maps to 89–214 (SLEHRAIVDQ…WKKLMVLAGH (126 aa)).

This sequence belongs to the GST superfamily. Phi family.

The protein resides in the cytoplasm. It localises to the cytosol. It carries out the reaction RX + glutathione = an S-substituted glutathione + a halide anion + H(+). In terms of biological role, involved in the transport and/or accumulation of both anthocyanins and proanthocyanidins (PA)s in the vacuole. Functions in the cytosol to maintain the regular accumulation in the vacuole of PA precursors, such as epicatechin and glycosylated epicatechin. The protein is Glutathione S-transferase F12 of Arabidopsis thaliana (Mouse-ear cress).